The chain runs to 128 residues: Protein Wnt-8 (128 aa).

Ser1 is lipidated: O-palmitoleoyl serine. Cystine bridges form between Cys71–Cys109 and Cys87–Cys102. N-linked (GlcNAc...) asparagine glycosylation is found at Asn74 and Asn93.

This sequence belongs to the Wnt family. Palmitoleoylation is required for efficient binding to frizzled receptors. Depalmitoleoylation leads to Wnt signaling pathway inhibition. Post-translationally, proteolytic processing by tiki1 and tiki2 promotes oxidation and formation of large disulfide-bond oligomers, leading to inactivation of wnt8.

Its subcellular location is the secreted. The protein localises to the extracellular space. It is found in the extracellular matrix. Its function is as follows. Ligand for members of the frizzled family of seven transmembrane receptors. Probable developmental protein. May be a signaling molecule which affects the development of discrete regions of tissues. Is likely to signal over only few cell diameters. This is Protein Wnt-8 (wnt8) from Thunnus thynnus (Atlantic bluefin tuna).